The primary structure comprises 557 residues: UvrABC system protein C (557 aa).

Residues 14-89 enclose the GIY-YIG domain; sequence EEPGVYIFKN…IKKYRPKYNV (76 aa). In terms of domain architecture, UVR spans 194–229; that stretch reads EEVFDYLKEKMETHSKMLDFENAAKYRDLLLNLSNV.

It belongs to the UvrC family. As to quaternary structure, interacts with UvrB in an incision complex.

The protein resides in the cytoplasm. In terms of biological role, the UvrABC repair system catalyzes the recognition and processing of DNA lesions. UvrC both incises the 5' and 3' sides of the lesion. The N-terminal half is responsible for the 3' incision and the C-terminal half is responsible for the 5' incision. The chain is UvrABC system protein C from Thermotoga maritima (strain ATCC 43589 / DSM 3109 / JCM 10099 / NBRC 100826 / MSB8).